A 285-amino-acid chain; its full sequence is NADPH-dependent 7-cyano-7-deazaguanine reductase (285 aa).

Residue 91–93 (IES) participates in substrate binding. 93 to 94 (SK) serves as a coordination point for NADPH. Catalysis depends on Cys192, which acts as the Thioimide intermediate. Asp199 acts as the Proton donor in catalysis. Residue 231–232 (HE) coordinates substrate. Residue 260–261 (RG) coordinates NADPH.

It belongs to the GTP cyclohydrolase I family. QueF type 2 subfamily. In terms of assembly, homodimer.

The protein resides in the cytoplasm. The enzyme catalyses 7-aminomethyl-7-carbaguanine + 2 NADP(+) = 7-cyano-7-deazaguanine + 2 NADPH + 3 H(+). It participates in tRNA modification; tRNA-queuosine biosynthesis. In terms of biological role, catalyzes the NADPH-dependent reduction of 7-cyano-7-deazaguanine (preQ0) to 7-aminomethyl-7-deazaguanine (preQ1). The polypeptide is NADPH-dependent 7-cyano-7-deazaguanine reductase (Psychromonas ingrahamii (strain DSM 17664 / CCUG 51855 / 37)).